A 165-amino-acid chain; its full sequence is Putative tyrosine-protein phosphatase AMV078 (165 aa).

Positions 2 to 149 constitute a Tyrosine-protein phosphatase domain; sequence NISNINNDIY…LKFYNSYKNI (148 aa). C94 (phosphocysteine intermediate) is an active-site residue.

Belongs to the protein-tyrosine phosphatase family. Non-receptor class dual specificity subfamily.

The enzyme catalyses O-phospho-L-tyrosyl-[protein] + H2O = L-tyrosyl-[protein] + phosphate. The polypeptide is Putative tyrosine-protein phosphatase AMV078 (Amsacta moorei entomopoxvirus (AmEPV)).